The primary structure comprises 1377 residues: DNA-directed RNA polymerase subunit beta (1377 aa).

The protein belongs to the RNA polymerase beta chain family. The RNAP catalytic core consists of 2 alpha, 1 beta, 1 beta' and 1 omega subunit. When a sigma factor is associated with the core the holoenzyme is formed, which can initiate transcription.

The enzyme catalyses RNA(n) + a ribonucleoside 5'-triphosphate = RNA(n+1) + diphosphate. DNA-dependent RNA polymerase catalyzes the transcription of DNA into RNA using the four ribonucleoside triphosphates as substrates. This Brucella abortus (strain S19) protein is DNA-directed RNA polymerase subunit beta.